The chain runs to 379 residues: Anhydro-N-acetylmuramic acid kinase (379 aa).

9-16 contacts ATP; that stretch reads GTSADGVD.

Belongs to the anhydro-N-acetylmuramic acid kinase family.

It catalyses the reaction 1,6-anhydro-N-acetyl-beta-muramate + ATP + H2O = N-acetyl-D-muramate 6-phosphate + ADP + H(+). The protein operates within amino-sugar metabolism; 1,6-anhydro-N-acetylmuramate degradation. It participates in cell wall biogenesis; peptidoglycan recycling. Its function is as follows. Catalyzes the specific phosphorylation of 1,6-anhydro-N-acetylmuramic acid (anhMurNAc) with the simultaneous cleavage of the 1,6-anhydro ring, generating MurNAc-6-P. Is required for the utilization of anhMurNAc either imported from the medium or derived from its own cell wall murein, and thus plays a role in cell wall recycling. This chain is Anhydro-N-acetylmuramic acid kinase, found in Parasynechococcus marenigrum (strain WH8102).